A 470-amino-acid chain; its full sequence is mRNA export factor ICP27 homolog (470 aa).

Disordered stretches follow at residues 1-31 (MALS…TGGD) and 62-204 (VGDP…DRLN). Positions 71–85 (VSFSASPQRAQPSNP) are enriched in polar residues. Basic residues-rich tracts occupy residues 94–107 (HGRR…RRNN) and 178–187 (RVHRNRRRGN). 4 residues coordinate Zn(2+): Cys-359, His-437, Cys-441, and Cys-446. Residues 359 to 446 (CYLSSSGSPT…HKRRCKADTC (88 aa)) form a CHC2-type zinc finger.

This sequence belongs to the HHV-1 ICP27 protein family. As to quaternary structure, homodimer. Homodimerization is required for transactivation. Associates in a complex with RNA, and host export factors NXF1/TAP and ALYREF; these interactions allow nuclear export of viral transcripts. Interacts with three host shuttling SR proteins SRSF1, SRSF3 and SRSF7. Interacts with host SRPK1. Interacts with IE62; this interaction enhances IE62 transactivation.

The protein localises to the host cytoplasm. The protein resides in the host nucleus. Multifunctional regulator of the expression of viral genes that mediates nuclear export of viral intronless mRNAs. This immediate early (EI) protein promotes the nuclear export of viral intronless mRNAs by interacting with mRNAs and host NXF1/TAP. This is mRNA export factor ICP27 homolog from Equine herpesvirus 1 (strain Ab4p) (EHV-1).